The primary structure comprises 293 residues: Ribosomal protein L11 methyltransferase (293 aa).

S-adenosyl-L-methionine contacts are provided by Thr-145, Gly-166, Asp-188, and Asn-230.

This sequence belongs to the methyltransferase superfamily. PrmA family.

It is found in the cytoplasm. It catalyses the reaction L-lysyl-[protein] + 3 S-adenosyl-L-methionine = N(6),N(6),N(6)-trimethyl-L-lysyl-[protein] + 3 S-adenosyl-L-homocysteine + 3 H(+). Functionally, methylates ribosomal protein L11. The sequence is that of Ribosomal protein L11 methyltransferase from Shewanella baltica (strain OS155 / ATCC BAA-1091).